We begin with the raw amino-acid sequence, 513 residues long: MEKFEGYSEKQKSRQHYFVYPLLFQEYIYAFAHDYGLNGSEPVEIFGCNNKKFSSLLVNRLIIRMYQQNFLINSVNYPNQDRLLDHRNYFYSEFYSQILSEGFAIVVEIPLSLGQLSCPEEKEIPNFQNLQSIHSIFPFLEDKFLHLHYLSHIKIPYPIHLEILVQLLEYRSQDVPSLHLLRFFLYYYSNWNSFITSMKSIFLLKKENKRLFRFLYNSYVSEYEFFLLFLHKQSSCLRLTSSGTFLERIIFSGKMEHFGVMYPGFFRKTIWFFMDPLMHYVRYQGKAILASKGTLLLKKKWKSYLVNFSQYFFSFWTQPQRIRLNQLTNSCFDFLGYLSSVPINTLLVRNQMLENSFLIDTRMKKFDTTVLATPLVGSLSKAQFCTGSGHPISKPVWTDLSDWDILDRFGRICRNIFHYYSGSSKKQTLYRLKYILRLSCARTLARKHKSTVRTFMQRLGSVFLEEFFTEEEQVFSLMFTKTIHFSFHGSHSECIWYLDIIRINDLVNPLTLN.

The protein belongs to the intron maturase 2 family. MatK subfamily.

The protein localises to the plastid. The protein resides in the chloroplast. In terms of biological role, usually encoded in the trnK tRNA gene intron. Probably assists in splicing its own and other chloroplast group II introns. The sequence is that of Maturase K from Zea mays (Maize).